The following is a 179-amino-acid chain: NADH-quinone oxidoreductase subunit I (179 aa).

2 consecutive 4Fe-4S ferredoxin-type domains span residues 49-79 and 89-118; these read LTRDPDGEERCVACNLCAVACPVACISLQKG and EFFRINFSRCIFCGLCEEACPTSAIQLTPD. Residues Cys-59, Cys-62, Cys-65, Cys-69, Cys-98, Cys-101, Cys-104, and Cys-108 each coordinate [4Fe-4S] cluster.

The protein belongs to the complex I 23 kDa subunit family. NDH-1 is composed of 14 different subunits. Subunits NuoA, H, J, K, L, M, N constitute the membrane sector of the complex. It depends on [4Fe-4S] cluster as a cofactor.

The protein localises to the cell inner membrane. It catalyses the reaction a quinone + NADH + 5 H(+)(in) = a quinol + NAD(+) + 4 H(+)(out). In terms of biological role, NDH-1 shuttles electrons from NADH, via FMN and iron-sulfur (Fe-S) centers, to quinones in the respiratory chain. The immediate electron acceptor for the enzyme in this species is believed to be ubiquinone. Couples the redox reaction to proton translocation (for every two electrons transferred, four hydrogen ions are translocated across the cytoplasmic membrane), and thus conserves the redox energy in a proton gradient. In Chromohalobacter salexigens (strain ATCC BAA-138 / DSM 3043 / CIP 106854 / NCIMB 13768 / 1H11), this protein is NADH-quinone oxidoreductase subunit I.